The following is a 117-amino-acid chain: Protein OPG035 (117 aa).

It belongs to the poxviridae OPG035 family.

Bcl-2-like protein which contributes to virulence by preventing host NF-kappa-B activation in response to pro-inflammatory stimuli such as TNF-alpha or IL1B. This chain is Protein OPG035 (OPG035), found in Bos taurus (Bovine).